A 101-amino-acid polypeptide reads, in one-letter code: Small ribosomal subunit protein bS6 (101 aa).

The protein belongs to the bacterial ribosomal protein bS6 family.

Its function is as follows. Binds together with bS18 to 16S ribosomal RNA. The protein is Small ribosomal subunit protein bS6 of Micrococcus luteus (strain ATCC 4698 / DSM 20030 / JCM 1464 / CCM 169 / CCUG 5858 / IAM 1056 / NBRC 3333 / NCIMB 9278 / NCTC 2665 / VKM Ac-2230) (Micrococcus lysodeikticus).